A 382-amino-acid polypeptide reads, in one-letter code: Carbamoyl phosphate synthase small chain (382 aa).

Residues 1–187 (MPTPALLVLA…EFRPQTATEE (187 aa)) are CPSase. Positions 47, 239, and 241 each coordinate L-glutamine. The region spanning 191-377 (TVVAIDFGVK…VAQMRAYRQQ (187 aa)) is the Glutamine amidotransferase type-1 domain. The active-site Nucleophile is the cysteine 267. L-glutamine-binding residues include leucine 268, glutamine 271, asparagine 307, glycine 309, and phenylalanine 310. Active-site residues include histidine 350 and glutamate 352.

Belongs to the CarA family. Composed of two chains; the small (or glutamine) chain promotes the hydrolysis of glutamine to ammonia, which is used by the large (or ammonia) chain to synthesize carbamoyl phosphate. Tetramer of heterodimers (alpha,beta)4.

It catalyses the reaction hydrogencarbonate + L-glutamine + 2 ATP + H2O = carbamoyl phosphate + L-glutamate + 2 ADP + phosphate + 2 H(+). It carries out the reaction L-glutamine + H2O = L-glutamate + NH4(+). It functions in the pathway amino-acid biosynthesis; L-arginine biosynthesis; carbamoyl phosphate from bicarbonate: step 1/1. Its pathway is pyrimidine metabolism; UMP biosynthesis via de novo pathway; (S)-dihydroorotate from bicarbonate: step 1/3. Small subunit of the glutamine-dependent carbamoyl phosphate synthetase (CPSase). CPSase catalyzes the formation of carbamoyl phosphate from the ammonia moiety of glutamine, carbonate, and phosphate donated by ATP, constituting the first step of 2 biosynthetic pathways, one leading to arginine and/or urea and the other to pyrimidine nucleotides. The small subunit (glutamine amidotransferase) binds and cleaves glutamine to supply the large subunit with the substrate ammonia. This is Carbamoyl phosphate synthase small chain from Thermosynechococcus vestitus (strain NIES-2133 / IAM M-273 / BP-1).